The primary structure comprises 622 residues: Palmitoyltransferase ZDHHC17 (622 aa).

Residues 1 to 294 are Cytoplasmic-facing; that stretch reads MADGPDEYDT…LKADKEFRQK (294 aa). Residues 1–295 form a necessary and sufficient for interaction with DNAJC5 and SNAP25 region; the sequence is MADGPDEYDT…KADKEFRQKV (295 aa). 7 ANK repeats span residues 41-76, 79-108, 113-142, 146-175, 179-209, 214-243, and 247-276; these read THVDDYSTWDIVKATQYGIYERCRELVEAGYDVRQP, ENVTLLHWAAINNRIDLVKYYISKGAIVDQ, LNSTPLHWATRQGHLSMVVQLMKYGADPSL, EGCSCIHLAAQFGHTSIVAYLIAKGQDVDM, NGMTPLMWAAYRTHSVDPTRLLLTFNVSVNL, HKNTALHWAVLAGNTTVISLLLEAGGNVDA, and KGESALDLAKQRKNVWMINHLQEARQAKGY. The next 2 helical transmembrane spans lie at 295–315 and 316–336; these read VMLGTPFLVIWLVGFIADLNI and DSWLIKGLMYGGVWATVQFLS. The Lumenal portion of the chain corresponds to 337–347; it reads KSFFDHSMHSA. A helical transmembrane segment spans residues 348–368; that stretch reads LPLGIYLATKFWMYVTWFFWF. The Cytoplasmic portion of the chain corresponds to 369–371; the sequence is WND. A helical transmembrane segment spans residues 372 to 392; that stretch reads LSFLSIHLPFLANSVALFYNF. The Lumenal portion of the chain corresponds to 393–470; sequence GKSWKSDPGI…GNCVGAGNHR (78 aa). Residues 427–477 enclose the DHHC domain; that stretch reads IFCSTCLIRKPVRSKHCGVCNRCIAKFDHHCPWVGNCVGAGNHRYFMGYLF. Residue Cys457 is the S-palmitoyl cysteine intermediate of the active site. The helical transmembrane segment at 471–491 threads the bilayer; sequence YFMGYLFFLLFMICWMIYGCV. The Cytoplasmic segment spans residues 492-506; the sequence is SYWGLHCETTYTKDG. The chain crosses the membrane as a helical span at residues 507 to 526; the sequence is FWTYITQIATCSPWMFWMFL. The Lumenal segment spans residues 527–529; the sequence is NSV. The chain crosses the membrane as a helical span at residues 530-552; that stretch reads FHFMWVAVLLMCQMYQITCLGIT. Residues 553–622 lie on the Cytoplasmic side of the membrane; sequence TNERMNARRY…QISGSGYQLV (70 aa).

The protein belongs to the DHHC palmitoyltransferase family. AKR/ZDHHC17 subfamily. Interacts (via ANK repeats) with numerous proteins (via the consensus sequence motif [VIAP]-[VIT]-x-x-Q-P). Interacts (via ANK repeats) with CLIP3. Interacts (via ANK repeats) with HTT. Interacts (via ANK repeats) with DNAJC5 (via C-terminus). Interacts (via ANK repeats) with MAP6. Interacts (via ANK repeats) with SNAP23. Interacts (via ANK repeats) with SNAP25. Interacts (via ANK repeats) with EVL. Interacts with SPRED1 and SPRED3. Interacts with GPM6A and OPTN. May interact (via ANK repeats) with SPRED2. May interact with NTRK1; may regulate its localization and function. Post-translationally, autopalmitoylated. Autopalmitoylation has a regulatory role in ZDHHC17-mediated Mg(2+) transport.

It localises to the golgi apparatus membrane. It is found in the cytoplasmic vesicle membrane. The protein resides in the presynaptic cell membrane. It catalyses the reaction L-cysteinyl-[protein] + hexadecanoyl-CoA = S-hexadecanoyl-L-cysteinyl-[protein] + CoA. The catalysed reaction is L-cysteinyl-[protein] + tetradecanoyl-CoA = S-tetradecanoyl-L-cysteinyl-[protein] + CoA. The enzyme catalyses L-cysteinyl-[protein] + octadecanoyl-CoA = S-octadecanoyl-L-cysteinyl-[protein] + CoA. Functionally, palmitoyltransferase that catalyzes the addition of palmitate onto various protein substrates and is involved in a variety of cellular processes. Has no stringent fatty acid selectivity and in addition to palmitate can also transfer onto target proteins myristate from tetradecanoyl-CoA and stearate from octadecanoyl-CoA. Palmitoyltransferase specific for a subset of neuronal proteins, including SNAP25, DLG4/PSD95, GAD2, SYT1 and HTT. Also palmitoylates neuronal protein GPM6A as well as SPRED1 and SPRED3. Could also play a role in axonogenesis through the regulation of NTRK1 and the downstream ERK1/ERK2 signaling cascade. May be involved in the sorting or targeting of critical proteins involved in the initiating events of endocytosis at the plasma membrane. May play a role in Mg(2+) transport. Could also palmitoylate DNAJC5 and regulate its localization to the Golgi membrane. Palmitoylates CASP6, thereby preventing its dimerization and subsequent activation. The sequence is that of Palmitoyltransferase ZDHHC17 from Rattus norvegicus (Rat).